The chain runs to 216 residues: UPF0502 protein Pfl01_3711 (216 aa).

The protein belongs to the UPF0502 family.

This Pseudomonas fluorescens (strain Pf0-1) protein is UPF0502 protein Pfl01_3711.